The following is a 128-amino-acid chain: Nitrogen fixation nifHD region GlnB-like protein 2 (128 aa).

The protein belongs to the P(II) protein family.

Functionally, could be involved in the regulation of nitrogen fixation. This chain is Nitrogen fixation nifHD region GlnB-like protein 2 (glnBB), found in Methanothermococcus thermolithotrophicus (Methanococcus thermolithotrophicus).